A 118-amino-acid chain; its full sequence is UPF0449 protein C19orf25 homolog (118 aa).

Position 63 is a phosphotyrosine (tyrosine 63). Positions 69 to 105 (YVAMNQRLQQAGAQLEQKRADLQQAGEELERDISQVG) form a coiled coil.

It belongs to the UPF0449 family.

The chain is UPF0449 protein C19orf25 homolog from Bos taurus (Bovine).